Here is a 236-residue protein sequence, read N- to C-terminus: NLP effector protein 3 (236 aa).

Residues 1–19 form the signal peptide; that stretch reads MNLLGFLAVVALSTASVQA. Positions 103 to 113 match the Conserved undecapeptide motif I motif; it reads AIMYSWYFPKD. Residues 120–126 carry the Hepta-peptide GHRHDWE motif II motif; the sequence is GHRHDWE.

Belongs to the Necrosis inducing protein (NPP1) family.

Its subcellular location is the secreted. Secreted effector that contributes to virulence during infection by P.capsici. Induces distinct chlorosis at 3 days after inoculation of host C.annuum leaves, and all the chlorotic areas gradually turn brown and become moderately necrotic at 7 days after inoculation. Leads only to chlorotic areas, without necrosis at 7 days after non-host N.benthamiana leaves infection. Induces cell death in hot pepper. In Phytophthora capsici, this protein is NLP effector protein 3.